A 709-amino-acid polypeptide reads, in one-letter code: Polyribonucleotide nucleotidyltransferase (709 aa).

2 residues coordinate Mg(2+): D486 and D492. The KH domain occupies 553–612 (PRIHTIKINPDKIKDVIGKGGSVIRALTEETGTTIEIEDDGTVKIAATDGEKAKHAISRI). Positions 622-690 (GRIYAGKVTR…RQGRVRLSIK (69 aa)) constitute an S1 motif domain.

The protein belongs to the polyribonucleotide nucleotidyltransferase family. In terms of assembly, component of the RNA degradosome, which is a multiprotein complex involved in RNA processing and mRNA degradation. Mg(2+) serves as cofactor.

The protein resides in the cytoplasm. The catalysed reaction is RNA(n+1) + phosphate = RNA(n) + a ribonucleoside 5'-diphosphate. Involved in mRNA degradation. Catalyzes the phosphorolysis of single-stranded polyribonucleotides processively in the 3'- to 5'-direction. This Photorhabdus luminescens (Xenorhabdus luminescens) protein is Polyribonucleotide nucleotidyltransferase.